We begin with the raw amino-acid sequence, 223 residues long: Fibronectin type III domain-containing protein 10 (223 aa).

An N-terminal signal peptide occupies residues 1 to 19 (MRAPPLLLLLAACAPPSGA). Residues 20–179 (AVDPTPPGWE…FTAEPAAMQE (160 aa)) are Extracellular-facing. The 97-residue stretch at 72-168 (LASAGGSLRA…VVPPELAECV (97 aa)) folds into the Fibronectin type-III domain. N-linked (GlcNAc...) asparagine glycans are attached at residues asparagine 86 and asparagine 109. The helical transmembrane segment at 180-200 (IVVAMTAVGGSICVMLVVICL) threads the bilayer. At 201-223 (LVAYITENLMHPTFRRPSLRRQP) the chain is on the cytoplasmic side.

The protein resides in the membrane. The polypeptide is Fibronectin type III domain-containing protein 10 (Fndc10) (Mus musculus (Mouse)).